Here is a 389-residue protein sequence, read N- to C-terminus: Abscission/NoCut checkpoint regulator (389 aa).

An FYVE-type zinc finger spans residues 1-58 (MESRCYGCAVKFTLFKKEYGCKNCGRAFCNGCLSFSALVPRAGNTQQKVCKQCHTILT). 8 residues coordinate Zn(2+): Cys5, Cys8, Cys21, Cys24, Cys29, Cys32, Cys50, and Cys53. Phosphoserine is present on Ser69. The MIM1-A signature appears at 99–112 (DQAIAERLARLRQE). Residue Lys132 forms a Glycyl lysine isopeptide (Lys-Gly) (interchain with G-Cter in SUMO2) linkage. Disordered stretches follow at residues 158 to 177 (PSHT…QAQQ) and 204 to 227 (QNDL…SQSL). A compositionally biased stretch (low complexity) spans 167-177 (QAPDTRTQAQQ). A compositionally biased stretch (polar residues) spans 214-226 (SQRTNSQGQASQS). Residue Ser219 is modified to Phosphoserine. The stretch at 226-261 (SLEEEKYKLLAEAAVELQEENTRQERILALAKRLAV) forms a coiled coil. An MIM1-B motif is present at residues 252–265 (ILALAKRLAVLKGQ). Phosphoserine is present on Ser280.

In terms of assembly, interacts (via MIM1-B) with VPS4A; interaction takes place at the midbody ring following cytokinesis checkpoint activation.

The protein localises to the cytoplasm. It localises to the cytoskeleton. Its subcellular location is the microtubule organizing center. The protein resides in the centrosome. It is found in the cleavage furrow. The protein localises to the midbody. It localises to the midbody ring. In terms of biological role, key regulator of abscission step in cytokinesis: part of the cytokinesis checkpoint, a process required to delay abscission to prevent both premature resolution of intercellular chromosome bridges and accumulation of DNA damage. Together with CHMP4C, required to retain abscission-competent VPS4 (VPS4A and/or VPS4B) at the midbody ring until abscission checkpoint signaling is terminated at late cytokinesis. Deactivation of AURKB results in dephosphorylation of CHMP4C followed by its dissociation from ZFYVE19/ANCHR and VPS4 and subsequent abscission. This is Abscission/NoCut checkpoint regulator (Zfyve19) from Mus musculus (Mouse).